Here is a 29-residue protein sequence, read N- to C-terminus: Cytolysin Oshem 1 (29 aa).

The protein localises to the secreted. It localises to the nematocyst. It is found in the target cell membrane. Functionally, cytolysin that shows moderate hemolysis and moderate myonecrosis. The polypeptide is Cytolysin Oshem 1 (Olindias sambaquiensis (Hydromedusa)).